The following is a 239-amino-acid chain: Uridylate kinase (239 aa).

ATP is bound at residue 10–13 (KISG). Residues 18 to 23 (GEAGFG) form an involved in allosteric activation by GTP region. Gly-52 serves as a coordination point for UMP. ATP is bound by residues Gly-53 and Arg-57. Residues Asp-72 and 133 to 140 (TGNPYFST) contribute to the UMP site. Residues Asn-161, Tyr-167, and Asp-170 each contribute to the ATP site.

Belongs to the UMP kinase family. In terms of assembly, homohexamer.

It localises to the cytoplasm. It carries out the reaction UMP + ATP = UDP + ADP. Its pathway is pyrimidine metabolism; CTP biosynthesis via de novo pathway; UDP from UMP (UMPK route): step 1/1. Its activity is regulated as follows. Allosterically activated by GTP. Inhibited by UTP. Catalyzes the reversible phosphorylation of UMP to UDP. The protein is Uridylate kinase of Lacticaseibacillus paracasei (strain ATCC 334 / BCRC 17002 / CCUG 31169 / CIP 107868 / KCTC 3260 / NRRL B-441) (Lactobacillus paracasei).